A 155-amino-acid chain; its full sequence is Vasotocin-neurophysin VT 2 (155 aa).

Residues 1-20 (MSVCAVLLLCVAGLLCLSSA) form the signal peptide. Residues cysteine 21 and cysteine 26 are joined by a disulfide bond. Glycine 29 is modified (glycine amide). 7 disulfides stabilise this stretch: cysteine 42-cysteine 86, cysteine 45-cysteine 59, cysteine 53-cysteine 76, cysteine 60-cysteine 66, cysteine 93-cysteine 106, cysteine 100-cysteine 118, and cysteine 107-cysteine 112. Residues 119–128 (SEDSESEEPA) are compositionally biased toward acidic residues. A disordered region spans residues 119–139 (SEDSESEEPADQNTLGASPGE).

Belongs to the vasopressin/oxytocin family.

The protein resides in the secreted. In terms of biological role, vasotocin is an antidiuretic hormone. This Catostomus commersonii (White sucker) protein is Vasotocin-neurophysin VT 2.